A 349-amino-acid polypeptide reads, in one-letter code: Probable transporter vicT (349 aa).

Residues 25–153 (IAAALLHALA…TALAGVVLVL (129 aa)) enclose the EamA domain. Transmembrane regions (helical) follow at residues 49-69 (PFTV…AYLW), 89-109 (AAGG…LSLS), 111-131 (ATVL…YWEG), 133-153 (TFAF…VLVL), 179-199 (LKGV…FSAM), 215-235 (FGVS…EVVW), 244-264 (LLAI…AGLG), 269-289 (RVTI…WAIW), and 294-314 (NVLT…PYLF).

It belongs to the TPT transporter family. SLC35D subfamily.

The protein localises to the membrane. In terms of biological role, probable transporter; part of the gene cluster that mediates the biosynthesis of the secondary metabolite victorin, the molecular basis for Victoria blight of oats. This is Probable transporter vicT from Bipolaris victoriae (strain FI3) (Victoria blight of oats agent).